Reading from the N-terminus, the 357-residue chain is Guanine nucleotide-binding protein alpha-1 subunit (357 aa).

G2 is lipidated: N-myristoyl glycine. A lipid anchor (S-palmitoyl cysteine) is attached at C4. Residues N32–Y357 enclose the G-alpha domain. The tract at residues K35–T48 is G1 motif. Positions 43, 44, 45, 46, 47, 48, 151, 176, 182, 204, 270, 271, 273, and 329 each coordinate GTP. S47 provides a ligand contact to Mg(2+). A G2 motif region spans residues D174–T182. T182 provides a ligand contact to Mg(2+). A G3 motif region spans residues F197–R206. The G4 motif stretch occupies residues I266–D273. The G5 motif stretch occupies residues T327–T332.

The protein belongs to the G-alpha family. G proteins are composed of 3 units; alpha, beta and gamma. The alpha chain contains the guanine nucleotide binding site. It depends on Mg(2+) as a cofactor.

In terms of biological role, guanine nucleotide-binding proteins (G proteins) are involved as modulators or transducers in various transmembrane signaling systems. The polypeptide is Guanine nucleotide-binding protein alpha-1 subunit (gpa-1) (Caenorhabditis elegans).